Consider the following 60-residue polypeptide: MFTLKKPLLLLFFLATINLSLCEQERNAEEERRDEPDERNAEVEKRFLPIVGKLLSLFGK.

The first 22 residues, 1 to 22, serve as a signal peptide directing secretion; the sequence is MFTLKKPLLLLFFLATINLSLC. A propeptide spans 23-44 (removed in mature form); that stretch reads EQERNAEEERRDEPDERNAEVE. The residue at position 58 (phenylalanine 58) is a Phenylalanine amide.

Belongs to the frog skin active peptide (FSAP) family. Temporin subfamily. As to expression, expressed by the skin glands.

It localises to the secreted. Functionally, antimicrobial peptide. The chain is Temporin-MT5 from Amolops mantzorum (Sichuan torrent frog).